A 257-amino-acid chain; its full sequence is Zinc uptake system ATP-binding protein ZurA (257 aa).

An ABC transporter domain is found at I5–E241. An ATP-binding site is contributed by G37–S44.

It belongs to the ABC transporter superfamily.

In terms of biological role, involved in a zinc uptake transport system. The protein is Zinc uptake system ATP-binding protein ZurA (zurA) of Listeria monocytogenes serovar 1/2a (strain ATCC BAA-679 / EGD-e).